A 328-amino-acid chain; its full sequence is Beta-ketoacyl-[acyl-carrier-protein] synthase III (328 aa).

Catalysis depends on residues cysteine 122 and histidine 255. The segment at 256–260 is ACP-binding; the sequence is QANVR. The active site involves asparagine 285.

Belongs to the thiolase-like superfamily. FabH family. As to quaternary structure, homodimer.

The protein resides in the cytoplasm. The catalysed reaction is malonyl-[ACP] + acetyl-CoA + H(+) = 3-oxobutanoyl-[ACP] + CO2 + CoA. The protein operates within lipid metabolism; fatty acid biosynthesis. Catalyzes the condensation reaction of fatty acid synthesis by the addition to an acyl acceptor of two carbons from malonyl-ACP. Catalyzes the first condensation reaction which initiates fatty acid synthesis and may therefore play a role in governing the total rate of fatty acid production. Possesses both acetoacetyl-ACP synthase and acetyl transacylase activities. Its substrate specificity determines the biosynthesis of branched-chain and/or straight-chain of fatty acids. The protein is Beta-ketoacyl-[acyl-carrier-protein] synthase III of Bordetella petrii (strain ATCC BAA-461 / DSM 12804 / CCUG 43448).